The primary structure comprises 346 residues: uncharacterized protein (346 aa).

A helical transmembrane segment spans residues 16–36 (ILGIIICIILIVGFFISFDST).

The protein resides in the membrane. This is an uncharacterized protein from Methanocaldococcus jannaschii (strain ATCC 43067 / DSM 2661 / JAL-1 / JCM 10045 / NBRC 100440) (Methanococcus jannaschii).